The chain runs to 655 residues: tRNA-guanine(15) transglycosylase (655 aa).

Residue Asp89 is the Nucleophile of the active site. Residues Asp124 and Ala195 each contribute to the substrate site. Residues Cys281, Cys283, and Cys286 each contribute to the Zn(2+) site. Residues 577–652 form the PUA domain; it reads KYRVVVNKEA…LAVKVRGGLK (76 aa).

This sequence belongs to the archaeosine tRNA-ribosyltransferase family. Requires Zn(2+) as cofactor.

It catalyses the reaction guanosine(15) in tRNA + 7-cyano-7-deazaguanine = 7-cyano-7-carbaguanosine(15) in tRNA + guanine. It functions in the pathway tRNA modification; archaeosine-tRNA biosynthesis. Exchanges the guanine residue with 7-cyano-7-deazaguanine (preQ0) at position 15 in the dihydrouridine loop (D-loop) of archaeal tRNAs. Can also utilize guanine as substrate. The chain is tRNA-guanine(15) transglycosylase from Methanocaldococcus jannaschii (strain ATCC 43067 / DSM 2661 / JAL-1 / JCM 10045 / NBRC 100440) (Methanococcus jannaschii).